The sequence spans 612 residues: Siderophore iron transporter 1 (612 aa).

Phosphoserine occurs at positions 5, 21, 22, 36, and 41. A run of 14 helical transmembrane segments spans residues 91–111 (ISFY…SFQA), 125–145 (FAGH…SAAI), 159–179 (LEAF…MAAS), 188–208 (GSVL…IFMA), 218–238 (LVLG…PRVA), 249–269 (WGIA…LAVY), 299–319 (IIGL…ISLA), 331–351 (FIVM…YEIF), 365–385 (EPTI…FYCW), 406–426 (YISY…GILI), 434–453 (WYFV…MIRY), 464–484 (IMPQ…LTVA), 495–515 (AIVT…GSAI), and 573–593 (ILTS…WFVA).

Belongs to the major facilitator superfamily.

Its subcellular location is the membrane. Functionally, involved in the transport of siderophore iron and so has a role in iron homeostasis. This Schizosaccharomyces pombe (strain 972 / ATCC 24843) (Fission yeast) protein is Siderophore iron transporter 1 (str1).